The following is a 323-amino-acid chain: E3 ubiquitin-protein ligase makorin (323 aa).

2 consecutive C3H1-type zinc fingers follow at residues 1–28 (MSDR…HDSK) and 29–56 (DPPN…HVRA). Low complexity predominate over residues 62-74 (LSSDSESLDRSIS). Positions 62-92 (LSSDSESLDRSISTTPSRHLQQQGDNNDGDK) are disordered. Residues 75–87 (TTPSRHLQQQGDN) are compositionally biased toward polar residues. The C3H1-type 3 zinc finger occupies 101–128 (PREYPICSFAAAGDCPRGNQCPHMHGDL). Positions 129–158 (CNTCGKKCLHPFRPEEREEHTKECEKKQKH) are makorin-type Cys-His. Residues 170–228 (CSVCLDRILSKATPGERKFGLLTECDHPFCIQCIRNWRSSAPVSGMDVNSTLRACPICR) form an RING-type zinc finger. The segment at 257–286 (KLRSIDCKHFNFGNGNCPFGASCFYKHAYS) adopts a C3H1-type 4 zinc-finger fold.

It catalyses the reaction S-ubiquitinyl-[E2 ubiquitin-conjugating enzyme]-L-cysteine + [acceptor protein]-L-lysine = [E2 ubiquitin-conjugating enzyme]-L-cysteine + N(6)-ubiquitinyl-[acceptor protein]-L-lysine.. It participates in protein modification; protein ubiquitination. E3 ubiquitin ligase catalyzing the covalent attachment of ubiquitin moieties onto substrate proteins. The polypeptide is E3 ubiquitin-protein ligase makorin (MKRN) (Arabidopsis thaliana (Mouse-ear cress)).